The following is a 257-amino-acid chain: Diphthine synthase (257 aa).

S-adenosyl-L-methionine-binding positions include leucine 9, aspartate 86, valine 89, 114–115 (SI), leucine 166, alanine 207, and histidine 232.

It belongs to the diphthine synthase family. As to quaternary structure, homodimer.

It carries out the reaction 2-[(3S)-amino-3-carboxypropyl]-L-histidyl-[translation elongation factor 2] + 3 S-adenosyl-L-methionine = diphthine-[translation elongation factor 2] + 3 S-adenosyl-L-homocysteine + 3 H(+). It participates in protein modification; peptidyl-diphthamide biosynthesis. In terms of biological role, S-adenosyl-L-methionine-dependent methyltransferase that catalyzes the trimethylation of the amino group of the modified target histidine residue in translation elongation factor 2 (EF-2), to form an intermediate called diphthine. The three successive methylation reactions represent the second step of diphthamide biosynthesis. The protein is Diphthine synthase of Methanocella arvoryzae (strain DSM 22066 / NBRC 105507 / MRE50).